Consider the following 256-residue polypeptide: Triosephosphate isomerase (256 aa).

9 to 11 provides a ligand contact to substrate; sequence NWK. The active-site Electrophile is histidine 97. Glutamate 169 functions as the Proton acceptor in the catalytic mechanism. Residues glycine 175, serine 214, and 235–236 each bind substrate; that span reads GG.

The protein belongs to the triosephosphate isomerase family. As to quaternary structure, homodimer.

It is found in the cytoplasm. It catalyses the reaction D-glyceraldehyde 3-phosphate = dihydroxyacetone phosphate. It participates in carbohydrate biosynthesis; gluconeogenesis. The protein operates within carbohydrate degradation; glycolysis; D-glyceraldehyde 3-phosphate from glycerone phosphate: step 1/1. Involved in the gluconeogenesis. Catalyzes stereospecifically the conversion of dihydroxyacetone phosphate (DHAP) to D-glyceraldehyde-3-phosphate (G3P). The sequence is that of Triosephosphate isomerase from Moritella marina (Vibrio marinus).